We begin with the raw amino-acid sequence, 357 residues long: Uroporphyrinogen decarboxylase (357 aa).

Residues 27-31, D77, Y154, S209, and H330 contribute to the substrate site; that span reads RQAGR.

The protein belongs to the uroporphyrinogen decarboxylase family. In terms of assembly, homodimer.

It is found in the cytoplasm. It catalyses the reaction uroporphyrinogen III + 4 H(+) = coproporphyrinogen III + 4 CO2. It functions in the pathway porphyrin-containing compound metabolism; protoporphyrin-IX biosynthesis; coproporphyrinogen-III from 5-aminolevulinate: step 4/4. Its function is as follows. Catalyzes the decarboxylation of four acetate groups of uroporphyrinogen-III to yield coproporphyrinogen-III. The sequence is that of Uroporphyrinogen decarboxylase from Acinetobacter baumannii (strain ACICU).